The sequence spans 273 residues: WIMGHMVNAIGQIDEFVNLGANSIETDVSFDSNANPEYTYHGIPCDCGRNCKKWENFNDFLKGLRSATTPGDSKYKEKLVLVVFDLKTGSLYDNQANDAGKKLAKNLLQHYWNNGNNGGRAYIVLSIPDLNHYPLIKGFTDTLKQEGHPELLDKLGYDFSGNDAIGDVANACKKAGVSGHVWQSDGITNCLLRGLTRVREAVANRDSGKGYINKVYYWTVDKRASTRDALDAGVDGIMTNYPDVITDVLNEAAYKSKFRVATYDDNPWETFKK.

Histidine 5 is an active-site residue. The Mg(2+) site is built by glutamate 25 and aspartate 27. Histidine 41 (nucleophile) is an active-site residue. 2 cysteine pairs are disulfide-bonded: cysteine 45/cysteine 51 and cysteine 47/cysteine 190. Position 85 (aspartate 85) interacts with Mg(2+).

Belongs to the arthropod phospholipase D family. Class II subfamily. Mg(2+) is required as a cofactor. In terms of tissue distribution, expressed by the venom gland.

Its subcellular location is the secreted. It catalyses the reaction an N-(acyl)-sphingosylphosphocholine = an N-(acyl)-sphingosyl-1,3-cyclic phosphate + choline. The enzyme catalyses an N-(acyl)-sphingosylphosphoethanolamine = an N-(acyl)-sphingosyl-1,3-cyclic phosphate + ethanolamine. It carries out the reaction a 1-acyl-sn-glycero-3-phosphocholine = a 1-acyl-sn-glycero-2,3-cyclic phosphate + choline. The catalysed reaction is a 1-acyl-sn-glycero-3-phosphoethanolamine = a 1-acyl-sn-glycero-2,3-cyclic phosphate + ethanolamine. Dermonecrotic toxins cleave the phosphodiester linkage between the phosphate and headgroup of certain phospholipids (sphingolipid and lysolipid substrates), forming an alcohol (often choline) and a cyclic phosphate. This toxin acts on sphingomyelin (SM). It may also act on ceramide phosphoethanolamine (CPE), lysophosphatidylcholine (LPC) and lysophosphatidylethanolamine (LPE), but not on lysophosphatidylserine (LPS), and lysophosphatidylglycerol (LPG). It acts by transphosphatidylation, releasing exclusively cyclic phosphate products as second products. Induces dermonecrosis, hemolysis, increased vascular permeability, edema, inflammatory response, and platelet aggregation. In Loxosceles spadicea (Recluse spider), this protein is Dermonecrotic toxin LspaSicTox-alphaIA1ii.